We begin with the raw amino-acid sequence, 456 residues long: Gamma-aminobutyric acid receptor subunit alpha-1 (456 aa).

The signal sequence occupies residues 1-27 (MRKSPGLSDYLWAWILLLSTLTGRSYG). Residues 28-253 (QPSLQDELKD…FHLKRKIGYF (226 aa)) lie on the Extracellular side of the membrane. N-linked (GlcNAc...) asparagine glycosylation is present at Asn-38. Residue Arg-94 coordinates 4-aminobutanoate. A glycan (N-linked (GlcNAc...) asparagine) is linked at Asn-138. Residue Thr-157 participates in 4-aminobutanoate binding. Cys-166 and Cys-180 are joined by a disulfide. Residues 254-274 (VIQTYLPCIMTVILSQVSFWL) form a helical membrane-spanning segment. The Cytoplasmic segment spans residues 275–279 (NRESV). Residues 280–301 (PARTVFGVTTVLTMTTLSISAR) traverse the membrane as a helical segment. Over 302 to 311 (NSLPKVAYAT) the chain is Extracellular. Residues 312-333 (AMDWFIAVCYAFVFSALIEFAT) traverse the membrane as a helical segment. Residues 334–421 (VNYFTKRGYA…TFNSVSKIDR (88 aa)) lie on the Cytoplasmic side of the membrane. The helical transmembrane segment at 422–441 (LSRIAFPLLFGIFNLVYWAT) threads the bilayer. Topologically, residues 442-456 (YLNREPQLKAPTPHQ) are extracellular.

The protein belongs to the ligand-gated ion channel (TC 1.A.9) family. Gamma-aminobutyric acid receptor (TC 1.A.9.5) subfamily. GABRA1 sub-subfamily. In terms of assembly, heteropentamer, formed by a combination of alpha (GABRA1-6), beta (GABRB1-3), gamma (GABRG1-3), delta (GABRD), epsilon (GABRE), rho (GABRR1-3), pi (GABRP) and theta (GABRQ) subunits, each subunit exhibiting distinct physiological and pharmacological properties. Interacts with UBQLN1. Interacts with TRAK1. Interacts with KIF21B. Identified in a complex of 720 kDa composed of LHFPL4, NLGN2, GABRA1, GABRB2, GABRG2 and GABRB3. Interacts with LHFPL4. Interacts with NLGN2. Interacts with SHISA7; interaction leads to the regulation of GABA(A) receptor trafficking, channel deactivation kinetics and pharmacology.

Its subcellular location is the postsynaptic cell membrane. The protein resides in the cell membrane. It is found in the cytoplasmic vesicle membrane. It catalyses the reaction chloride(in) = chloride(out). Allosterically activated by benzodiazepines, the neuroanesthetic alphaxalone and pentobarbital. Inhibited by the antagonist bicuculline. Potentiated by histamine. In terms of biological role, alpha subunit of the heteropentameric ligand-gated chloride channel gated by gamma-aminobutyric acid (GABA), a major inhibitory neurotransmitter in the brain. GABA-gated chloride channels, also named GABA(A) receptors (GABAAR), consist of five subunits arranged around a central pore and contain GABA active binding site(s) located at the alpha and beta subunit interface(s). When activated by GABA, GABAARs selectively allow the flow of chloride anions across the cell membrane down their electrochemical gradient. Alpha-1/GABRA1-containing GABAARs are largely synaptic. Chloride influx into the postsynaptic neuron following GABAAR opening decreases the neuron ability to generate a new action potential, thereby reducing nerve transmission. GABAARs containing alpha-1 and beta-2 or -3 subunits exhibit synaptogenic activity; the gamma-2 subunit being necessary but not sufficient to induce rapid synaptic contacts formation. GABAARs function also as histamine receptor where histamine binds at the interface of two neighboring beta subunits and potentiates GABA response. GABAARs containing alpha, beta and epsilon subunits also permit spontaneous chloride channel activity while preserving the structural information required for GABA-gated openings. Alpha-1-mediated plasticity in the orbitofrontal cortex regulates context-dependent action selection. Together with rho subunits, may also control neuronal and glial GABAergic transmission in the cerebellum. The chain is Gamma-aminobutyric acid receptor subunit alpha-1 (GABRA1) from Macaca fascicularis (Crab-eating macaque).